The chain runs to 154 residues: Cytochrome c oxidase subunit 5A, mitochondrial (154 aa).

The N-terminal 45 residues, 1-45, are a transit peptide targeting the mitochondrion; sequence MLAAALRRCXASVRVLLPKPGAAAPSSWSSSAFRATAAIQSVRCY. An SIFI-degron motif is present at residues 2–21; that stretch reads LAAALRRCXASVRVLLPKPG. 2 positions are modified to N6-acetyllysine: Lys-91 and Lys-117. At Thr-145 the chain carries Phosphothreonine.

Belongs to the cytochrome c oxidase subunit 5A family. In terms of assembly, component of the cytochrome c oxidase (complex IV, CIV), a multisubunit enzyme composed of 14 subunits. The complex is composed of a catalytic core of 3 subunits MT-CO1, MT-CO2 and MT-CO3, encoded in the mitochondrial DNA, and 11 supernumerary subunits COX4I, COX5A, COX5B, COX6A, COX6B, COX6C, COX7A, COX7B, COX7C, COX8 and NDUFA4, which are encoded in the nuclear genome. The complex exists as a monomer or a dimer and forms supercomplexes (SCs) in the inner mitochondrial membrane with NADH-ubiquinone oxidoreductase (complex I, CI) and ubiquinol-cytochrome c oxidoreductase (cytochrome b-c1 complex, complex III, CIII), resulting in different assemblies (supercomplex SCI(1)III(2)IV(1) and megacomplex MCI(2)III(2)IV(2)). Interacts with AFG1L. Interacts with RAB5IF. In response to mitochondrial stress, the precursor protein is ubiquitinated by the SIFI complex in the cytoplasm before mitochondrial import, leading to its degradation. Within the SIFI complex, UBR4 initiates ubiquitin chain that are further elongated or branched by KCMF1.

The protein localises to the mitochondrion inner membrane. It participates in energy metabolism; oxidative phosphorylation. Component of the cytochrome c oxidase, the last enzyme in the mitochondrial electron transport chain which drives oxidative phosphorylation. The respiratory chain contains 3 multisubunit complexes succinate dehydrogenase (complex II, CII), ubiquinol-cytochrome c oxidoreductase (cytochrome b-c1 complex, complex III, CIII) and cytochrome c oxidase (complex IV, CIV), that cooperate to transfer electrons derived from NADH and succinate to molecular oxygen, creating an electrochemical gradient over the inner membrane that drives transmembrane transport and the ATP synthase. Cytochrome c oxidase is the component of the respiratory chain that catalyzes the reduction of oxygen to water. Electrons originating from reduced cytochrome c in the intermembrane space (IMS) are transferred via the dinuclear copper A center (CU(A)) of subunit 2 and heme A of subunit 1 to the active site in subunit 1, a binuclear center (BNC) formed by heme A3 and copper B (CU(B)). The BNC reduces molecular oxygen to 2 water molecules using 4 electrons from cytochrome c in the IMS and 4 protons from the mitochondrial matrix. The sequence is that of Cytochrome c oxidase subunit 5A, mitochondrial (COX5A) from Notamacropus parma (Parma wallaby).